A 607-amino-acid polypeptide reads, in one-letter code: Elongation factor 4 (607 aa).

A tr-type G domain is found at 11 to 193 (SKIRNFSIIA…QIVEKVPAPA (183 aa)). GTP-binding positions include 23-28 (DHGKST) and 140-143 (NKID).

The protein belongs to the TRAFAC class translation factor GTPase superfamily. Classic translation factor GTPase family. LepA subfamily.

Its subcellular location is the cell membrane. The enzyme catalyses GTP + H2O = GDP + phosphate + H(+). Its function is as follows. Required for accurate and efficient protein synthesis under certain stress conditions. May act as a fidelity factor of the translation reaction, by catalyzing a one-codon backward translocation of tRNAs on improperly translocated ribosomes. Back-translocation proceeds from a post-translocation (POST) complex to a pre-translocation (PRE) complex, thus giving elongation factor G a second chance to translocate the tRNAs correctly. Binds to ribosomes in a GTP-dependent manner. This Bacillus cereus (strain B4264) protein is Elongation factor 4.